Reading from the N-terminus, the 189-residue chain is Molybdopterin synthase catalytic subunit (189 aa).

Residues 1–30 (MSSLEISNSCFSPETRSPSSRQSVEDNASE) are compositionally biased toward polar residues. A disordered region spans residues 1–41 (MSSLEISNSCFSPETRSPSSRQSVEDNASEPSGKDVDDVQE). A Phosphoserine modification is found at Ser20. The span at 32–41 (SGKDVDDVQE) shows a compositional bias: basic and acidic residues. Residues 143–144 (HR), Lys159, and 166–168 (KKE) contribute to the substrate site.

It belongs to the MoaE family. MOCS2B subfamily. Heterotetramer; composed of 2 small (MOCS2A) and 2 large (MOCS2B) subunits.

Its subcellular location is the cytoplasm. It localises to the cytosol. It catalyses the reaction 2 [molybdopterin-synthase sulfur-carrier protein]-C-terminal-Gly-aminoethanethioate + cyclic pyranopterin phosphate + H2O = molybdopterin + 2 [molybdopterin-synthase sulfur-carrier protein]-C-terminal Gly-Gly + 2 H(+). It functions in the pathway cofactor biosynthesis; molybdopterin biosynthesis. Functionally, catalytic subunit of the molybdopterin synthase complex, a complex that catalyzes the conversion of precursor Z into molybdopterin. Acts by mediating the incorporation of 2 sulfur atoms from thiocarboxylated MOCS2A into precursor Z to generate a dithiolene group. This Mus musculus (Mouse) protein is Molybdopterin synthase catalytic subunit.